The primary structure comprises 896 residues: Protein translocase subunit SecA (896 aa).

ATP contacts are provided by residues glutamine 87, 105–109 (GEGKT), and aspartate 512. Residues 858 to 886 (RAGGEAEAAKPVVRDEKKVGRNDPCPCGS) are disordered. Positions 869-878 (VVRDEKKVGR) are enriched in basic and acidic residues. Zn(2+) contacts are provided by cysteine 882, cysteine 884, cysteine 893, and cysteine 894.

It belongs to the SecA family. Monomer and homodimer. Part of the essential Sec protein translocation apparatus which comprises SecA, SecYEG and auxiliary proteins SecDF-YajC and YidC. Requires Zn(2+) as cofactor.

Its subcellular location is the cell inner membrane. The protein localises to the cytoplasm. It carries out the reaction ATP + H2O + cellular proteinSide 1 = ADP + phosphate + cellular proteinSide 2.. Functionally, part of the Sec protein translocase complex. Interacts with the SecYEG preprotein conducting channel. Has a central role in coupling the hydrolysis of ATP to the transfer of proteins into and across the cell membrane, serving as an ATP-driven molecular motor driving the stepwise translocation of polypeptide chains across the membrane. In Syntrophotalea carbinolica (strain DSM 2380 / NBRC 103641 / GraBd1) (Pelobacter carbinolicus), this protein is Protein translocase subunit SecA.